A 114-amino-acid polypeptide reads, in one-letter code: MSSAAPAPSTHAAKSIRKNGKNWHDNKKPFRPNGGLTSYTKRAAARKEQEAIKEYEKELREEREAERQAHIQRIKERRAAKEEKERYEKMAEKMHRKRVERLKKREKRNKLLNS.

Residues 1-13 (MSSAAPAPSTHAA) show a composition bias toward low complexity. Disordered stretches follow at residues 1–47 (MSSA…AARK) and 77–114 (RRAAKEEKERYEKMAEKMHRKRVERLKKREKRNKLLNS). The stretch at 40–101 (TKRAAARKEQ…EKMHRKRVER (62 aa)) forms a coiled coil. Positions 77–93 (RRAAKEEKERYEKMAEK) are enriched in basic and acidic residues. Over residues 94 to 114 (MHRKRVERLKKREKRNKLLNS) the composition is skewed to basic residues.

Belongs to the CGR1 family.

The protein resides in the nucleus. Its subcellular location is the nucleolus. Involved in nucleolar integrity and required for processing of the pre-rRNA for the 60S ribosome subunit. The protein is rRNA-processing protein cgrA (cgrA) of Emericella nidulans (strain FGSC A4 / ATCC 38163 / CBS 112.46 / NRRL 194 / M139) (Aspergillus nidulans).